The chain runs to 609 residues: Threonine--tRNA ligase (609 aa).

The catalytic stretch occupies residues 215-506 (DHRIIGNEMK…LIEHTAGELP (292 aa)). 3 residues coordinate Zn(2+): Cys307, His358, and His483.

This sequence belongs to the class-II aminoacyl-tRNA synthetase family. Homodimer. Zn(2+) is required as a cofactor.

The protein localises to the cytoplasm. It carries out the reaction tRNA(Thr) + L-threonine + ATP = L-threonyl-tRNA(Thr) + AMP + diphosphate + H(+). In terms of biological role, catalyzes the attachment of threonine to tRNA(Thr) in a two-step reaction: L-threonine is first activated by ATP to form Thr-AMP and then transferred to the acceptor end of tRNA(Thr). Also edits incorrectly charged L-seryl-tRNA(Thr). The chain is Threonine--tRNA ligase from Campylobacter hominis (strain ATCC BAA-381 / DSM 21671 / CCUG 45161 / LMG 19568 / NCTC 13146 / CH001A).